A 63-amino-acid polypeptide reads, in one-letter code: uncharacterized protein (63 aa).

This is an uncharacterized protein from Homo sapiens (Human).